We begin with the raw amino-acid sequence, 905 residues long: DNA-directed RNA polymerase subunit Rpo1N (905 aa).

Zn(2+)-binding residues include Cys60, Cys63, Cys70, His73, Cys100, Cys103, Cys147, and Cys150. Mg(2+) is bound by residues Asp461, Asp463, and Asp465.

This sequence belongs to the RNA polymerase beta' chain family. Part of the RNA polymerase complex. The cofactor is Mg(2+). Requires Zn(2+) as cofactor.

The protein localises to the cytoplasm. The catalysed reaction is RNA(n) + a ribonucleoside 5'-triphosphate = RNA(n+1) + diphosphate. In terms of biological role, DNA-dependent RNA polymerase (RNAP) catalyzes the transcription of DNA into RNA using the four ribonucleoside triphosphates as substrates. Forms the clamp head domain. This is DNA-directed RNA polymerase subunit Rpo1N from Thermococcus celer.